The following is a 1140-amino-acid chain: DNA damage-binding protein 1 (1140 aa).

Serine 2 carries the post-translational modification N-acetylserine. Residues 2-768 (SYNYVVTAQK…QALSSSVSSS (767 aa)) are interaction with CDT1. A WD repeat beta-propeller A region spans residues 13–356 (TAVNGCVTGH…VVAMETFTNL (344 aa)). Residues 391–708 (RNGIGIHEHA…LTIGTIDEIQ (318 aa)) form a WD repeat beta-propeller B; Interaction with CUL4A region. The tract at residues 709–1043 (KLHIRTVPLY…NGMIGLVTSL (335 aa)) is WD repeat beta-propeller C. Residues 771-1140 (FSSSTAPHET…KVVEELTRIH (370 aa)) are interaction with CDT1 and CUL4A. Position 1067 is an N6-acetyllysine (lysine 1067). A Glycyl lysine isopeptide (Lys-Gly) (interchain with G-Cter in SUMO2) cross-link involves residue lysine 1121. At threonine 1125 the chain carries Phosphothreonine.

This sequence belongs to the DDB1 family. Component of the UV-DDB complex which includes DDB1 and DDB2; the heterodimer dimerizes to give rise to a heterotetramer when bound to damaged DNA. The UV-DDB complex interacts with monoubiquitinated histone H2A and binds to XPC via the DDB2 subunit. Component of numerous DCX (DDB1-CUL4-X-box) E3 ubiquitin-protein ligase complexes which consist of a core of DDB1, CUL4A or CUL4B and RBX1. DDB1 may recruit specific substrate targeting subunits to the DCX complex. These substrate targeting subunits are generally known as DCAF (DDB1- and CUL4-associated factor) or CDW (CUL4-DDB1-associated WD40-repeat) proteins. Interacts with AMBRA1, ATG16L1, BTRC, CRBN, DCAF1, DCAF4, DCAF5, DCAF6, DCAF7, DCAF8, DCAF9, DCAF10, DCAF11, DCAF12, DCAF15, DCAF16, DCAF17, DDA1, DET1, DTL, ERCC8, FBXW5, FBXW8, GRWD1, KATNB1, NLE1, NUP43, PAFAH1B1, PHIP, PWP1, RBBP4, RBBP5, RBBP7, COP1, SNRNP40, DCAF1, WDR5, WDR5B, WDR12, WDR26, WDR39, WDR42, WDR53, WDR59, WDR61, WSB1, WSB2, LRWD1 and WDTC1. DCX complexes may associate with the COP9 signalosome, and this inhibits the E3 ubiquitin-protein ligase activity of the complex. Interacts with NF2, TSC1 and TSC2. Interacts with AGO1 and AGO2. Associates with the E3 ligase complex containing DYRK2, EDD/UBR5, DDB1 and DCAF1 proteins (EDVP complex). Interacts directly with DYRK2. DCX(DTL) complex interacts with FBXO11; does not ubiquitinate and degradate FBXO11. Interacts with TRPC4AP. Interacts with CRY1 and CRY2. The DDB1-CUL4A complex interacts with CRY1. May also interact with DCUN1D1, DCUN1D2, DCUN1D3 and DCUN1D5. Component of the DCX(DCAF13) E3 ubiquitin ligase complex, at least composed of CUL4 (CUL4A or CUL4B), DDB1, DCAF13 and RBX1. Interacts with DCAF13 (via WD40 domain). Phosphorylated by ABL1. In terms of processing, ubiquitinated by CUL4A. Subsequently degraded by ubiquitin-dependent proteolysis. Post-translationally, acetylated, promoting interaction with CUL4 (CUL4A or CUL4B) and subsequent formation of DCX (DDB1-CUL4-X-box) E3 ubiquitin-protein ligase complexes. Deacetylation by SIRT7 impairs the interaction with CUL4 (CUL4A or CUL4B) and formation of DCX (DDB1-CUL4-X-box) E3 ubiquitin-protein ligase complexes.

The protein resides in the cytoplasm. It is found in the nucleus. The protein operates within protein modification; protein ubiquitination. Functionally, protein, which is both involved in DNA repair and protein ubiquitination, as part of the UV-DDB complex and DCX (DDB1-CUL4-X-box) complexes, respectively. Core component of the UV-DDB complex (UV-damaged DNA-binding protein complex), a complex that recognizes UV-induced DNA damage and recruit proteins of the nucleotide excision repair pathway (the NER pathway) to initiate DNA repair. The UV-DDB complex preferentially binds to cyclobutane pyrimidine dimers (CPD), 6-4 photoproducts (6-4 PP), apurinic sites and short mismatches. Also functions as a component of numerous distinct DCX (DDB1-CUL4-X-box) E3 ubiquitin-protein ligase complexes which mediate the ubiquitination and subsequent proteasomal degradation of target proteins. The functional specificity of the DCX E3 ubiquitin-protein ligase complex is determined by the variable substrate recognition component recruited by DDB1. DCX(DDB2) (also known as DDB1-CUL4-ROC1, CUL4-DDB-ROC1 and CUL4-DDB-RBX1) may ubiquitinate histone H2A, histone H3 and histone H4 at sites of UV-induced DNA damage. The ubiquitination of histones may facilitate their removal from the nucleosome and promote subsequent DNA repair. DCX(DDB2) also ubiquitinates XPC, which may enhance DNA-binding by XPC and promote NER. DCX(DTL) plays a role in PCNA-dependent polyubiquitination of CDT1 and MDM2-dependent ubiquitination of TP53 in response to radiation-induced DNA damage and during DNA replication. DCX(ERCC8) (the CSA complex) plays a role in transcription-coupled repair (TCR). The DDB1-CUL4A-DTL E3 ligase complex regulates the circadian clock function by mediating the ubiquitination and degradation of CRY1. DDB1-mediated CRY1 degradation promotes FOXO1 protein stability and FOXO1-mediated gluconeogenesis in the liver. By acting on TET dioxygenses, essential for oocyte maintenance at the primordial follicle stage, hence essential for female fertility. Maternal factor required for proper zygotic genome activation and genome reprogramming. This is DNA damage-binding protein 1 (DDB1) from Bos taurus (Bovine).